Consider the following 326-residue polypeptide: tRNA-modifying protein YgfZ (326 aa).

Folate is bound by residues tryptophan 27 and tryptophan 189.

This sequence belongs to the tRNA-modifying YgfZ family.

The protein resides in the cytoplasm. Its function is as follows. Folate-binding protein involved in regulating the level of ATP-DnaA and in the modification of some tRNAs. It is probably a key factor in regulatory networks that act via tRNA modification, such as initiation of chromosomal replication. This chain is tRNA-modifying protein YgfZ, found in Escherichia coli O157:H7 (strain EC4115 / EHEC).